The sequence spans 338 residues: UDP-3-O-acylglucosamine N-acyltransferase (338 aa).

The Proton acceptor role is filled by H239.

Belongs to the transferase hexapeptide repeat family. LpxD subfamily. In terms of assembly, homotrimer.

The enzyme catalyses a UDP-3-O-[(3R)-3-hydroxyacyl]-alpha-D-glucosamine + a (3R)-hydroxyacyl-[ACP] = a UDP-2-N,3-O-bis[(3R)-3-hydroxyacyl]-alpha-D-glucosamine + holo-[ACP] + H(+). It participates in bacterial outer membrane biogenesis; LPS lipid A biosynthesis. In terms of biological role, catalyzes the N-acylation of UDP-3-O-acylglucosamine using 3-hydroxyacyl-ACP as the acyl donor. Is involved in the biosynthesis of lipid A, a phosphorylated glycolipid that anchors the lipopolysaccharide to the outer membrane of the cell. The chain is UDP-3-O-acylglucosamine N-acyltransferase from Xylella fastidiosa (strain M12).